The sequence spans 2371 residues: NBAS subunit of NRZ tethering complex (2371 aa).

An interaction with USE1 region spans residues 1 to 1035 (MAAPESGPAL…KTEATTKLHD (1035 aa)). WD repeat units lie at residues 130–169 (DPKP…LFVI) and 316–355 (QEQD…QQGE). Phosphoserine is present on residues Ser-473 and Ser-475. Residues 1036–2371 (MVDQLEQILS…TALRAAQHWV (1336 aa)) are interaction with ZW10 and RINT1. An N6-acetyllysine modification is found at Lys-1057.

In terms of assembly, component of the NRZ complex composed of NBAS, ZW10 and RINT1/TIP20L; NRZ associates with SNAREs STX18, USE1, BNIP1/SEC20L and SEC22B (the assembly has been described as syntaxin 18 complex); links NRZ to SNARE USE1. Broadly expressed, with highest levels in heart and skeletal muscle, and lowest levels in liver, small intestine and thymus. Well expressed in retinal ganglion cells, epidermal skin cells, and leukocytes. Up-regulated together with N-myc in some neuroblastoma cell lines.

It is found in the cytoplasm. Its subcellular location is the endoplasmic reticulum. It localises to the endoplasmic reticulum membrane. Functionally, involved in Golgi-to-endoplasmic reticulum (ER) retrograde transport; the function is proposed to depend on its association in the NRZ complex which is believed to play a role in SNARE assembly at the ER. Required for normal embryonic development. May play a role in the nonsense-mediated decay pathway of mRNAs containing premature stop codons. The protein is NBAS subunit of NRZ tethering complex of Homo sapiens (Human).